A 475-amino-acid polypeptide reads, in one-letter code: MAAGALRGLPVAGGGESSESEDDGWEIGYLDRTSQKLKGLLPIEEKKEKFKKAMTIGDVSLVQELLDSGISVDSTFQYGWTPLMYAASVANAELVRVLLDRGANASFEKDKQSILITACSARGSEEQILKCVELLLSRNADPNVACRRLMTPIMYAARDGHTQVVALLVAHGAEVNTQDENGYTALTWAARQGHKNIVLKLLELGANKMLQTKDGKMPSEIAKRNKHHEIFNLLSFTLNPLEGKLQQLTKEDTICKILTTDSDREKDHIFSSYTAFGDLEVFLHGLGLEHMTDLLKERDITLRHLLTMREDEFTKNGITSKDQQKILAALKELQVEEIQFGELSEETKLEISGDEFLNFLLKLNKQCGHLITAVQNIITELPVNSQKITLEWASPRNFTSVCEELVNNVEDLSEEVCKLKDLIQKLQNERENDPTHIQLREEVSTWNSRILKRTAITVCGFGFLLFICKLTFQRK.

The interval 1-25 (MAAGALRGLPVAGGGESSESEDDGW) is disordered. Ser-17, Ser-18, and Ser-20 each carry phosphoserine. ANK repeat units follow at residues 45 to 74 (EKKEKFKKAMTIGDVSLVQELLDSGISVDS), 78 to 107 (YGWTPLMYAASVANAELVRVLLDRGANASF), 110 to 144 (DKQSILITACSARGSEEQILKCVELLLSRNADPNV), 148 to 177 (RLMTPIMYAARDGHTQVVALLVAHGAEVNT), 181 to 210 (NGYTALTWAARQGHKNIVLKLLELGANKML), and 214 to 243 (DGKMPSEIAKRNKHHEIFNLLSFTLNPLEG). Positions 272-334 (SYTAFGDLEV…KILAALKELQ (63 aa)) constitute an SAM domain.

As to quaternary structure, interacts with DDX4, PIWIL1, RANBP9 and TDRD1.

The protein localises to the cytoplasm. In terms of biological role, plays a central role during spermatogenesis by repressing transposable elements and preventing their mobilization, which is essential for the germline integrity. Acts via the piRNA metabolic process, which mediates the repression of transposable elements during meiosis by forming complexes composed of piRNAs and Piwi proteins and governs the methylation and subsequent repression of transposons. Its association with pi-bodies suggests a participation in the primary piRNAs metabolic process. Required prior to the pachytene stage to facilitate the production of multiple types of piRNAs, including those associated with repeats involved in the regulation of retrotransposons. May act by mediating protein-protein interactions during germ cell maturation. The protein is Ankyrin repeat, SAM and basic leucine zipper domain-containing protein 1 (ASZ1) of Pongo abelii (Sumatran orangutan).